A 433-amino-acid polypeptide reads, in one-letter code: Protein translocase subunit SecY (433 aa).

10 helical membrane-spanning segments follow: residues 17-37, 71-91, 117-137, 141-161, 184-204, 212-232, 268-288, 309-329, 366-386, and 388-408; these read IIFTIFVLIICRFGSFIPIAG, IFALAIMPYITASIIIQLMSV, LTVLLASLQAYGVAVSLESIV, GPVVIIPGLFFKITTVITLVV, LIIFIGIISGVPSAIISMFEL, PLVAIAVCAGVVILISIIIFF, GVIPPIFASSILLFPATLANF, IYILLYVALIMFFSFFYTAIV, LTVVGGIYLSVICIIPELLMN, and YVISLSLGGTSFLIVVNVVLD.

Belongs to the SecY/SEC61-alpha family. Component of the Sec protein translocase complex. Heterotrimer consisting of SecY, SecE and SecG subunits. The heterotrimers can form oligomers, although 1 heterotrimer is thought to be able to translocate proteins. Interacts with the ribosome. Interacts with SecDF, and other proteins may be involved. Interacts with SecA.

The protein resides in the cell inner membrane. In terms of biological role, the central subunit of the protein translocation channel SecYEG. Consists of two halves formed by TMs 1-5 and 6-10. These two domains form a lateral gate at the front which open onto the bilayer between TMs 2 and 7, and are clamped together by SecE at the back. The channel is closed by both a pore ring composed of hydrophobic SecY resides and a short helix (helix 2A) on the extracellular side of the membrane which forms a plug. The plug probably moves laterally to allow the channel to open. The ring and the pore may move independently. The chain is Protein translocase subunit SecY from Rickettsia bellii (strain RML369-C).